The following is a 249-amino-acid chain: Dihydroneopterin 2',3'-cyclic phosphate phosphodiesterase (249 aa).

Residues 58–172 (LIEHTISVTK…VHYADEADSK (115 aa)) enclose the HD domain.

As to quaternary structure, homododecamer. Fe(2+) is required as a cofactor. Requires Zn(2+) as cofactor.

The enzyme catalyses 7,8-dihydroneopterin 2',3'-cyclic phosphate + H2O = 7,8-dihydroneopterin 3'-phosphate + H(+). It carries out the reaction 7,8-dihydroneopterin 2',3'-cyclic phosphate + H2O = 7,8-dihydroneopterin 2'-phosphate + H(+). It functions in the pathway cofactor biosynthesis; 5,6,7,8-tetrahydromethanopterin biosynthesis. Functionally, cyclic phosphodiesterase that hydrolyzes the cyclic phosphate of 7,8-dihydroneopterin 2',3'-cyclic phosphate (H2N-cP) and converts it to a mixture of 7,8-dihydroneopterin 2'-phosphate (H2N-2'P) and 7,8-dihydroneopterin 3'-phosphate (H2N-3'P). Is also able to utilize other phosphodiesters as substrates in vitro: hydrolysis of bis-pNPP and pNPPC produces nitrophenyl phosphate, and that of 2',3'-cAMP produces 3'-AMP. ATP, 3',5'-cAMP, GTP, 3',5'-cGMP, and 4',5'-cFMN cannot serve as substrates. The polypeptide is Dihydroneopterin 2',3'-cyclic phosphate phosphodiesterase (mptB) (Methanocaldococcus jannaschii (strain ATCC 43067 / DSM 2661 / JAL-1 / JCM 10045 / NBRC 100440) (Methanococcus jannaschii)).